Here is a 395-residue protein sequence, read N- to C-terminus: Elongation factor Tu (395 aa).

One can recognise a tr-type G domain in the interval 6–205 (KPHINVGTIG…NALEKISLPT (200 aa)). A G1 region spans residues 15–22 (GHVDHGKT). A GTP-binding site is contributed by 15 to 22 (GHVDHGKT). Mg(2+) is bound at residue Thr22. Residues 59 to 63 (GITIS) form a G2 region. Positions 80-83 (DCPG) are G3. GTP is bound by residues 80–84 (DCPGH) and 135–138 (NKCD). The G4 stretch occupies residues 135–138 (NKCD). A G5 region spans residues 173-175 (SAV).

Belongs to the TRAFAC class translation factor GTPase superfamily. Classic translation factor GTPase family. EF-Tu/EF-1A subfamily. In terms of assembly, monomer.

The protein localises to the cytoplasm. It carries out the reaction GTP + H2O = GDP + phosphate + H(+). GTP hydrolase that promotes the GTP-dependent binding of aminoacyl-tRNA to the A-site of ribosomes during protein biosynthesis. This Ehrlichia chaffeensis (strain ATCC CRL-10679 / Arkansas) protein is Elongation factor Tu.